The chain runs to 49 residues: Large ribosomal subunit protein bL33B (49 aa).

It belongs to the bacterial ribosomal protein bL33 family.

The sequence is that of Large ribosomal subunit protein bL33B from Acholeplasma laidlawii (strain PG-8A).